The following is a 326-amino-acid chain: Putative F-box protein At3g22710 (326 aa).

An F-box domain is found at 1–50 (MTMPDLPPDLVEEILSRVPATSVKKLRSTCTQWNAIFKDERFTEKHFSKA).

The protein is Putative F-box protein At3g22710 of Arabidopsis thaliana (Mouse-ear cress).